The chain runs to 144 residues: Large-conductance mechanosensitive channel (144 aa).

Transmembrane regions (helical) follow at residues 16–36 (VIDL…VDSV) and 86–106 (GNFL…FLMV).

It belongs to the MscL family. In terms of assembly, homopentamer.

Its subcellular location is the cell inner membrane. Channel that opens in response to stretch forces in the membrane lipid bilayer. May participate in the regulation of osmotic pressure changes within the cell. In Cupriavidus pinatubonensis (strain JMP 134 / LMG 1197) (Cupriavidus necator (strain JMP 134)), this protein is Large-conductance mechanosensitive channel.